Consider the following 273-residue polypeptide: Thiazole synthase (273 aa).

The Schiff-base intermediate with DXP role is filled by lysine 110. Residues glycine 171, 198–199 (AG), and 220–221 (NS) contribute to the 1-deoxy-D-xylulose 5-phosphate site.

It belongs to the ThiG family. As to quaternary structure, homotetramer. Forms heterodimers with either ThiH or ThiS.

The protein localises to the cytoplasm. It carries out the reaction [ThiS sulfur-carrier protein]-C-terminal-Gly-aminoethanethioate + 2-iminoacetate + 1-deoxy-D-xylulose 5-phosphate = [ThiS sulfur-carrier protein]-C-terminal Gly-Gly + 2-[(2R,5Z)-2-carboxy-4-methylthiazol-5(2H)-ylidene]ethyl phosphate + 2 H2O + H(+). It participates in cofactor biosynthesis; thiamine diphosphate biosynthesis. Catalyzes the rearrangement of 1-deoxy-D-xylulose 5-phosphate (DXP) to produce the thiazole phosphate moiety of thiamine. Sulfur is provided by the thiocarboxylate moiety of the carrier protein ThiS. In vitro, sulfur can be provided by H(2)S. This chain is Thiazole synthase, found in Hydrogenovibrio crunogenus (strain DSM 25203 / XCL-2) (Thiomicrospira crunogena).